Consider the following 142-residue polypeptide: Hemoglobin subunit alpha (142 aa).

The 141-residue stretch at 2-142 (VLSAADKNNV…VSTVLTSKYR (141 aa)) folds into the Globin domain. Phosphoserine is present on Ser4. Residues Lys8 and Lys12 each carry the N6-succinyllysine modification. Lys17 carries the post-translational modification N6-acetyllysine; alternate. Lys17 is modified (N6-succinyllysine; alternate). The residue at position 25 (Tyr25) is a Phosphotyrosine. At Ser36 the chain carries Phosphoserine. An N6-succinyllysine modification is found at Lys41. A Phosphoserine modification is found at Ser50. His59 is a binding site for O2. His88 contributes to the heme b binding site. Phosphothreonine is present on Thr109. Phosphoserine occurs at positions 125 and 132. Phosphothreonine is present on residues Thr135 and Thr138. Ser139 is subject to Phosphoserine.

It belongs to the globin family. In terms of assembly, heterotetramer of two alpha chains and two beta chains. In terms of tissue distribution, red blood cells.

Involved in oxygen transport from the lung to the various peripheral tissues. Its function is as follows. Hemopressin acts as an antagonist peptide of the cannabinoid receptor CNR1. Hemopressin-binding efficiently blocks cannabinoid receptor CNR1 and subsequent signaling. The chain is Hemoglobin subunit alpha (HBA) from Cavia porcellus (Guinea pig).